The chain runs to 403 residues: Odorant receptor 43b (403 aa).

The Cytoplasmic portion of the chain corresponds to M1–R49. A helical transmembrane segment spans residues V50 to I70. Residues H71–S83 are Extracellular-facing. Residues L84–T104 traverse the membrane as a helical segment. The Cytoplasmic segment spans residues H105–R139. A helical transmembrane segment spans residues L140–L160. The Extracellular portion of the chain corresponds to L161–T193. Residues V194–A214 traverse the membrane as a helical segment. Topologically, residues L215–T271 are cytoplasmic. The chain crosses the membrane as a helical span at residues I272–L292. The Extracellular portion of the chain corresponds to F293–R299. A helical transmembrane segment spans residues F300 to C320. Topologically, residues N321–N372 are cytoplasmic. A helical transmembrane segment spans residues L373 to M393. Residues N394–E403 are Extracellular-facing.

Belongs to the insect chemoreceptor superfamily. Heteromeric odorant receptor channel (TC 1.A.69) family. Or2a subfamily. As to quaternary structure, interacts with Orco. Complexes exist early in the endomembrane system in olfactory sensory neurons (OSNs), coupling these complexes to the conserved ciliary trafficking pathway. As to expression, expressed in 16 olfactory receptor neurons in a broad area across the antenna, including both anterior and posterior faces and in the maxillary palp. This expression pattern matches the distribution of the small sensilla basiconica. Expression in the antenna is observed late in antennal development at 93 hours APF.

Its subcellular location is the cell membrane. In terms of biological role, odorant receptor which mediates acceptance or avoidance behavior, depending on its substrates. The odorant receptor repertoire encodes a large collection of odor stimuli that vary widely in identity, intensity, and duration. May form a complex with Orco to form odorant-sensing units, providing sensitive and prolonged odorant signaling and calcium permeability. This Drosophila melanogaster (Fruit fly) protein is Odorant receptor 43b (Or43b).